A 193-amino-acid polypeptide reads, in one-letter code: Potassium-transporting ATPase KdpC subunit (193 aa).

The helical transmembrane segment at 7–27 (PLVVIFAVLTVVTGMAYPAVM) threads the bilayer.

This sequence belongs to the KdpC family. The system is composed of three essential subunits: KdpA, KdpB and KdpC.

The protein resides in the cell inner membrane. In terms of biological role, part of the high-affinity ATP-driven potassium transport (or Kdp) system, which catalyzes the hydrolysis of ATP coupled with the electrogenic transport of potassium into the cytoplasm. This subunit acts as a catalytic chaperone that increases the ATP-binding affinity of the ATP-hydrolyzing subunit KdpB by the formation of a transient KdpB/KdpC/ATP ternary complex. This chain is Potassium-transporting ATPase KdpC subunit, found in Burkholderia vietnamiensis (strain G4 / LMG 22486) (Burkholderia cepacia (strain R1808)).